A 1174-amino-acid polypeptide reads, in one-letter code: HEAT repeat-containing protein 6 (1174 aa).

Residues 168 to 207 form an HEAT 1 repeat; sequence NELLGPTGILVNLCDPSQPDPELWREAIHCMANLCLGVPG. Disordered stretches follow at residues 304–346 and 373–392; these read GRSP…EELK and LGPQKSPLDPHQGQVGKDHF. The segment covering 323–335 has biased composition (basic residues); it reads SKKKRKAGKQKKG. The segment covering 336 to 346 has biased composition (basic and acidic residues); that stretch reads HQGEESKEELK. 3 HEAT repeats span residues 460–498, 523–560, and 566–603; these read GIGSPQSVSLMTIALKDSSPKTRACALQVLSAILDGSKQ, SIRELHRCLLLAIVAESSAQTLTQIIKCLANLVSNAPY, and GLLTRVWNQIKPYIRNKDVNVRVSSLTLLGAIVSAQVS. Residues 619–648 are disordered; it reads SQNSGSATPSDPESNRKESMLEGGKKNGLH. The segment covering 631–648 has biased composition (basic and acidic residues); the sequence is ESNRKESMLEGGKKNGLH.

This chain is HEAT repeat-containing protein 6 (heatr6), found in Xenopus laevis (African clawed frog).